The chain runs to 426 residues: 5-hydroxybenzimidazole synthase BzaB (426 aa).

Substrate-binding positions include M95, Y124, H163, 185 to 187, 226 to 229, and E265; these read SRG and DAIR. H269 is a binding site for Zn(2+). F292 is a binding site for substrate. H333 provides a ligand contact to Zn(2+). [4Fe-4S] cluster-binding residues include C407, C410, and C414.

This sequence belongs to the ThiC family. 5-hydroxybenzimidazole synthase subfamily. It depends on [4Fe-4S] cluster as a cofactor.

The catalysed reaction is 5-amino-1-(5-phospho-beta-D-ribosyl)imidazole + AH2 + S-adenosyl-L-methionine = 5-hydroxybenzimidazole + 5'-deoxyadenosine + formate + L-methionine + A + NH4(+) + phosphate + 2 H(+). Its function is as follows. Together with BzaA, probably catalyzes the conversion of aminoimidazole ribotide (AIR) to 5-hydroxybenzimidazole (5-HBI) in a radical S-adenosyl-L-methionine (SAM)-dependent reaction. Is thus involved in the anaerobic biosynthesis of the benzimidazole lower axial ligand of the cobamide produced by M.thermoacetica. Requires BzaA for catalytic activity, as BzaB alone displays no activity. This Moorella thermoacetica (strain ATCC 39073 / JCM 9320) protein is 5-hydroxybenzimidazole synthase BzaB.